Here is a 478-residue protein sequence, read N- to C-terminus: NADH oxidase (478 aa).

FAD is bound by residues 8-12, aspartate 33, cysteine 43, valine 80, 111-114, lysine 149, and tyrosine 177; these read GINHA and ASGA. The active-site Proton acceptor is the histidine 11. Cysteine 43 (redox-active) is an active-site residue. Cysteine sulfinic acid (-SO2H) is present on cysteine 43. NAD(+)-binding positions include 170–185, aspartate 197, and glycine 264; that span reads VAIV…LAEA. FAD contacts are provided by residues 295 to 305, leucine 322, alanine 323, and threonine 324; that span reads LNHKDVYVIGG. Position 353 (alanine 353) interacts with NAD(+). FAD is bound at residue phenylalanine 450.

It belongs to the class-III pyridine nucleotide-disulfide oxidoreductase family. FAD serves as cofactor.

It carries out the reaction 2 NADH + O2 + 2 H(+) = 2 NAD(+) + 2 H2O. In terms of biological role, catalyzes the four-electron reduction of molecular oxygen to water. In Mycoplasma genitalium (strain ATCC 33530 / DSM 19775 / NCTC 10195 / G37) (Mycoplasmoides genitalium), this protein is NADH oxidase (nox).